The following is a 178-amino-acid chain: Large ribosomal subunit protein uL6 (178 aa).

It belongs to the universal ribosomal protein uL6 family. As to quaternary structure, part of the 50S ribosomal subunit.

Functionally, this protein binds to the 23S rRNA, and is important in its secondary structure. It is located near the subunit interface in the base of the L7/L12 stalk, and near the tRNA binding site of the peptidyltransferase center. The protein is Large ribosomal subunit protein uL6 of Streptococcus equi subsp. zooepidemicus (strain H70).